Reading from the N-terminus, the 127-residue chain is Aspartate 1-decarboxylase (127 aa).

The Schiff-base intermediate with substrate; via pyruvic acid role is filled by S25. S25 carries the post-translational modification Pyruvic acid (Ser). T57 is a binding site for substrate. The active-site Proton donor is Y58. 73–75 contributes to the substrate binding site; the sequence is GAA.

Belongs to the PanD family. In terms of assembly, heterooctamer of four alpha and four beta subunits. The cofactor is pyruvate. Is synthesized initially as an inactive proenzyme, which is activated by self-cleavage at a specific serine bond to produce a beta-subunit with a hydroxyl group at its C-terminus and an alpha-subunit with a pyruvoyl group at its N-terminus.

It localises to the cytoplasm. The enzyme catalyses L-aspartate + H(+) = beta-alanine + CO2. It functions in the pathway cofactor biosynthesis; (R)-pantothenate biosynthesis; beta-alanine from L-aspartate: step 1/1. In terms of biological role, catalyzes the pyruvoyl-dependent decarboxylation of aspartate to produce beta-alanine. The sequence is that of Aspartate 1-decarboxylase from Staphylococcus carnosus (strain TM300).